Consider the following 460-residue polypeptide: Inactive 7-epi-sesquithujene synthase (460 aa).

Positions 308 and 312 each coordinate Mg(2+). Substrate is bound by residues Asp-308 and Asp-312. The short motif at 308–312 (DDMFD) is the DDXXD motif element.

This sequence belongs to the terpene synthase family. In terms of assembly, monomer. The cofactor is Mg(2+). Requires Mn(2+) as cofactor.

Its subcellular location is the cytoplasm. It participates in secondary metabolite biosynthesis; terpenoid biosynthesis. In terms of biological role, non-functional sesquiterpene synthase due to a frameshift removing part of the catalytic site. The polypeptide is Inactive 7-epi-sesquithujene synthase (Zea mays (Maize)).